Consider the following 930-residue polypeptide: Protein ARABIDILLO 1 (930 aa).

Positions 3-8 match the Nuclear localization signal motif; it reads RRVRRK. In terms of domain architecture, F-box spans 44–90; the sequence is FVDWISLPYDTVLQLFTCLNYRDRASLASTCKTWRCLGASSCLWTSL. ARM repeat units follow at residues 172–212, 244–285, 379–418, 428–467, 469–508, 510–552, 554–594, 600–639, 641–683, 685–724, 726–766, 790–831, and 835–875; these read RITS…KHCP, TSNI…TSSQ, PEGLDDFWLNEGAALLLNLMQSSQEDVQERSATGLATFVV, CGRAEAVMKDGGIRLLLELAKSWREGLQSEAAKAIANLSV, ANIAKSVAEEGGIKILAGLAKSMNRLVAEEAAGGLWNLSV, EEHK…NLAA, DKCS…NLAA, NNNAAVGQEAGALEALVQLTKSPHEGVRQEAAGALWNLSF, DKNR…GLSV, EANSVAIGREGGVPPLIALARSEAEDVHETAAGALWNLAF, PGNA…YMFD, LDGA…QVTE, and IQEA…QFTI.

The protein belongs to the beta-catenin family. As to quaternary structure, interacts with SNL1. Interacts with MYB53, MYB92 and MYB93. Expressed ubiquitously, with higher levels in root tip, pericycle and vasculature.

It localises to the nucleus. Its function is as follows. Promotes lateral root initiation and development, independently of auxin (IAA) and abscisis acid (ABA). This is Protein ARABIDILLO 1 (FBX5) from Arabidopsis thaliana (Mouse-ear cress).